The primary structure comprises 56 residues: Ferredoxin (56 aa).

4Fe-4S ferredoxin-type domains follow at residues 2-28 and 29-56; these read AYKILDTCVSCGACAAECPVDAISQGD and TQFVIDADTCIDCGNCANVCPVGAPVQE. [4Fe-4S] cluster contacts are provided by Cys-9, Cys-12, Cys-15, Cys-19, Cys-38, Cys-41, Cys-44, and Cys-48.

It depends on [4Fe-4S] cluster as a cofactor.

Its function is as follows. Ferredoxins are iron-sulfur proteins that transfer electrons in a wide variety of metabolic reactions. In Clostridium perfringens (strain 13 / Type A), this protein is Ferredoxin (fer).